The sequence spans 435 residues: Adenylosuccinate synthetase (435 aa).

GTP contacts are provided by residues 11–17 (GDEGKGK) and 39–41 (GHT). Asp-12 (proton acceptor) is an active-site residue. Mg(2+) contacts are provided by Asp-12 and Gly-39. IMP contacts are provided by residues 12–15 (DEGK), 37–40 (NAGH), Thr-128, Arg-142, Gln-223, Thr-238, and Arg-302. The active-site Proton donor is the His-40. 298 to 304 (SVTGRPR) is a binding site for substrate. GTP-binding positions include Arg-304, 330–332 (KLD), and 412–414 (STG).

The protein belongs to the adenylosuccinate synthetase family. In terms of assembly, homodimer. It depends on Mg(2+) as a cofactor.

It localises to the cytoplasm. It catalyses the reaction IMP + L-aspartate + GTP = N(6)-(1,2-dicarboxyethyl)-AMP + GDP + phosphate + 2 H(+). The protein operates within purine metabolism; AMP biosynthesis via de novo pathway; AMP from IMP: step 1/2. Its function is as follows. Plays an important role in the de novo pathway of purine nucleotide biosynthesis. Catalyzes the first committed step in the biosynthesis of AMP from IMP. This chain is Adenylosuccinate synthetase, found in Coxiella burnetii (strain CbuK_Q154) (Coxiella burnetii (strain Q154)).